A 512-amino-acid polypeptide reads, in one-letter code: MKIYSWGSGNLGQLGIGNTDDSVSTPTLVLPPDGKKDYEIVNDIVGGGCHSMMIIDNGDLYTFGSNDSGQLGINSNEQQQQQQQQQQQQQQQQQQQQQQQQYQTIPTILNYFKINSIKIKNCSGGWAHSLACDNNGNIYSWGSNSHGQLGIDTTCSLNSTLSTSNNKNNNNNNNNNNNNNNNNNNNNNNNNNNNNNSGGVIKKKIVLKKKKVERKNLNEPKLIEILFNNKIRIVSVSCGMRHSIALSSENDVYGWGCNKFGQLSNLIDGNSLKSNNNNNNINDIADPMVQDSPKLINFKNEIKIIQISCGFQHTLLLDINFKNVLSFGQNKFGQLGNGNFIDQSNPCVIDISSFILPTSTSKSLNDIKIKEIQCGWSNSCLLTNQDKLYICGRGEYGILGDNRDLSLDNSNSNQFKLLNSESFNENKIKNFSIGSEHILIQVYSNDNNNNNNNNNNIYSFGWNEHYQLGLCEPIIIGKDGDNKSFPQLLPSIKGNDKSLVKAGGGNSFFILP.

RCC1 repeat units lie at residues 1–56, 58–134, 135–185, 197–248, 249–319, 321–384, 386–443, and 454–512; these read MKIY…MIID, GDLY…ACDN, NGNI…NNNN, SGGV…ALSS, ENDV…LLDI, FKNV…LLTN, DKLY…IQVY, and NNNI…FILP. The segment covering 66-77 has biased composition (polar residues); sequence NDSGQLGINSNE. Disordered stretches follow at residues 66–85 and 162–200; these read NDSG…QQQQ and STSN…SGGV. A compositionally biased stretch (low complexity) spans 162–196; sequence STSNNKNNNNNNNNNNNNNNNNNNNNNNNNNNNNN.

This is RCC1 domain-containing protein DDB_G0279253 from Dictyostelium discoideum (Social amoeba).